Reading from the N-terminus, the 85-residue chain is MHIVLFKPTPYNVRKNTQFKALIADTWELVLDIPAEESPPFGRVEFIKFAVRPTKRQIRQCKRYFRKIVKLEKQFVTCDYAEILK.

This is an uncharacterized protein from Escherichia coli (Bacteriophage T4).